The primary structure comprises 356 residues: Popeye domain-containing protein 1 (356 aa).

The Extracellular segment spans residues 1-48 (MNFTEPSPLAQSTVVGFLPELESLTPVPSNETSCENWREVHHLVFHAA). 2 N-linked (GlcNAc...) asparagine glycosylation sites follow: asparagine 2 and asparagine 30. Residues 49 to 69 (NVCFAVGLLIPTTLHLHMILL) form a helical membrane-spanning segment. Arginine 70 is a topological domain (cytoplasmic). A helical transmembrane segment spans residues 71-91 (VMLSIGCTLYVVWATLYRCAL). A topological domain (extracellular) is located at residue aspartate 92. A helical membrane pass occupies residues 93–113 (MMIWNSVFLGINILHLSYLLY). The interval 93–115 (MMIWNSVFLGINILHLSYLLYKK) is required for interaction with CAV3. The Cytoplasmic segment spans residues 114–356 (KKRPVKIEKD…VPVSPAHQLP (243 aa)). Residues 136 to 186 (RVPPDLFRRLTGQFCVIQTLKRGQVYATEDKTSVDDRLSILLKGRMKVSYR) are required for interaction with KCNK2. A phosphoserine mark is found at serine 295 and serine 318. Over residues 313 to 323 (SSSTASLPMSS) the composition is skewed to low complexity. A disordered region spans residues 313–356 (SSSTASLPMSSPQQRASPKMKPIEEGLEDDDEVFVPVSPAHQLP).

Belongs to the popeye family. Homodimer. Homodimerization requires the C-terminus cytoplasmic region. Interacts (via the C-terminus cytoplasmic tail) with TJP1. Interacts (via the C-terminus cytoplasmic tail) with ARHGEF25/GEFT (via the DH domain). Interacts (via the C-terminus cytoplasmic tail) with VAMP3. Interacts with KCNK2; the interaction enhances KCNK2 surface expression and is inhibited by cAMP. Interacts with CAV3. In terms of tissue distribution, strongly expressed in heart and skeletal muscle. Weakly expressed in brain, spleen, liver, kidney and lung.

It is found in the lateral cell membrane. The protein localises to the cell junction. Its subcellular location is the tight junction. The protein resides in the membrane. It localises to the cell membrane. It is found in the sarcolemma. The protein localises to the caveola. Functionally, cell adhesion molecule involved in the establishment and/or maintenance of cell integrity. Involved in the formation and regulation of the tight junction (TJ) paracellular permeability barrier in epithelial cells. Plays a role in VAMP3-mediated vesicular transport and recycling of different receptor molecules through its interaction with VAMP3. Plays a role in the regulation of cell shape and movement by modulating the Rho-family GTPase activity through its interaction with ARHGEF25/GEFT. Induces primordial adhesive contact and aggregation of epithelial cells in a Ca(2+)-independent manner. Important for skeletal muscle and heart development. Also involved in striated muscle regeneration and repair and in the regulation of cell spreading. Important for the maintenance of cardiac function. Plays a regulatory function in heart rate dynamics mediated, at least in part, through cAMP-binding and, probably, by increasing cell surface expression of the potassium channel KCNK2 and enhancing current density. Is a caveolae-associated protein important for the preservation of caveolae structural and functional integrity as well as for heart protection against ischemia injury. This is Popeye domain-containing protein 1 (Popdc1) from Rattus norvegicus (Rat).